Reading from the N-terminus, the 183-residue chain is UPF0397 protein stu0306/stu0307 (183 aa).

5 helical membrane passes run 11–31 (ATGIGAALFIIICIFVNIPIF), 44–64 (VLFSVIFGSRSIIGFFMGFIG), 74–94 (GDISWAWVLASGITGLVIGLF), 111–131 (IWFNLAQALGLLIAYGVVTPI), and 149–169 (FVAGVANFITIAIGGTLLLAI).

Belongs to the UPF0397 family.

Its subcellular location is the cell membrane. In Streptococcus thermophilus (strain ATCC BAA-250 / LMG 18311), this protein is UPF0397 protein stu0306/stu0307.